The sequence spans 125 residues: Cyclin-dependent protein kinase inhibitor SMR16 (125 aa).

In terms of biological role, probable cyclin-dependent protein kinase (CDK) inhibitor that functions as a repressor of mitosis in the endoreduplication cell cycle. In Arabidopsis thaliana (Mouse-ear cress), this protein is Cyclin-dependent protein kinase inhibitor SMR16.